An 88-amino-acid chain; its full sequence is Small ribosomal subunit protein bS16 (88 aa).

The protein belongs to the bacterial ribosomal protein bS16 family.

The protein is Small ribosomal subunit protein bS16 of Anaeromyxobacter dehalogenans (strain 2CP-1 / ATCC BAA-258).